We begin with the raw amino-acid sequence, 518 residues long: Xylose import ATP-binding protein XylG (518 aa).

2 ABC transporter domains span residues leucine 6–glutamate 245 and phenylalanine 262–proline 507. Glycine 38 to serine 45 contacts ATP.

It belongs to the ABC transporter superfamily. Xylose importer (TC 3.A.1.2.4) family. As to quaternary structure, the complex is composed of two ATP-binding proteins (XylG), two transmembrane proteins (XylH) and a solute-binding protein (XylF).

It localises to the cell inner membrane. It catalyses the reaction D-xylose(out) + ATP + H2O = D-xylose(in) + ADP + phosphate + H(+). Its function is as follows. Part of the ABC transporter complex XylFGH involved in xylose import. Responsible for energy coupling to the transport system. This is Xylose import ATP-binding protein XylG from Pseudomonas savastanoi pv. phaseolicola (strain 1448A / Race 6) (Pseudomonas syringae pv. phaseolicola (strain 1448A / Race 6)).